We begin with the raw amino-acid sequence, 294 residues long: 4-hydroxy-tetrahydrodipicolinate synthase (294 aa).

T45 is a pyruvate binding site. The active-site Proton donor/acceptor is Y133. Catalysis depends on K161, which acts as the Schiff-base intermediate with substrate. Position 203 (I203) interacts with pyruvate.

The protein belongs to the DapA family. As to quaternary structure, homotetramer; dimer of dimers.

The protein resides in the cytoplasm. It carries out the reaction L-aspartate 4-semialdehyde + pyruvate = (2S,4S)-4-hydroxy-2,3,4,5-tetrahydrodipicolinate + H2O + H(+). Its pathway is amino-acid biosynthesis; L-lysine biosynthesis via DAP pathway; (S)-tetrahydrodipicolinate from L-aspartate: step 3/4. Functionally, catalyzes the condensation of (S)-aspartate-beta-semialdehyde [(S)-ASA] and pyruvate to 4-hydroxy-tetrahydrodipicolinate (HTPA). The sequence is that of 4-hydroxy-tetrahydrodipicolinate synthase from Shewanella baltica (strain OS223).